The chain runs to 408 residues: Protein ZNF365 (408 aa).

S16 is modified (phosphoserine). The segment at 26–51 adopts a C2H2-type; degenerate zinc-finger fold; sequence FRCPRCGDHTRFRSLSSLRAHLEFSH. Residues S139 and S146 each carry the phosphoserine modification. A coiled-coil region spans residues 170-298; that stretch reads VEAVDRTIEK…QLEYYQSQQA (129 aa). T176 is subject to Phosphothreonine. Phosphoserine is present on S370.

Homodimer. Interacts with NDE1 and NDEL1. Interacts with DISC1. Interacts with PARP1. Interacts with MCRS1. Detected in several tissues, with highest levels in brain. Also expressed during embryonic development. Expressed in cerebral cortex, hippocampus, striatum, inferior colliculus and thalamus.

It localises to the cytoplasm. It is found in the cytoskeleton. The protein resides in the microtubule organizing center. Its subcellular location is the centrosome. Functionally, contributes to genomic stability by preventing telomere dysfunction. Involved in the morphogenesis of basket cells in the somatosensory cortex during embryogenesis. Involved in the positive regulation of oligodendrocyte differentiation during postnatal growth. Involved in dendritic arborization, morphogenesis of spine density dendrite, and establishment of postsynaptic dendrite density in cortical pyramidal neurons. Involved in the regulation of neurogenesis. Negatively regulates neurite outgrowth. Involved in homologous recombination (HR) repair pathway. Required for proper resolution of DNA double-strand breaks (DSBs) by HR. Is required for recovery of stalled replication forks, and directly contributes to genomic stability. Interacts with PARP1 and mediates MRE11-dependent DNA end resection during replication fork recovery. The chain is Protein ZNF365 (Znf365) from Mus musculus (Mouse).